Consider the following 491-residue polypeptide: Nuatigenin 3-beta-glucosyltransferase (491 aa).

Histidine 20 serves as the catalytic Proton acceptor. Residue histidine 20 coordinates an anthocyanidin. Aspartate 125 serves as the catalytic Charge relay. Positions 352, 354, 369, 372, 373, 374, and 377 each coordinate UDP-alpha-D-glucose. Alanine 392 is an an anthocyanidin binding site. The UDP-alpha-D-glucose site is built by glutamate 393 and glutamine 394.

The protein belongs to the UDP-glycosyltransferase family. As to expression, expressed in roots, stems and leaves.

The catalysed reaction is nuatigenin + UDP-alpha-D-glucose = nuatigenin 3-beta-D-glucopyranoside + UDP + H(+). The enzyme catalyses diosgenin + UDP-alpha-D-glucose = diosgenin 3-O-beta-D-glucoside + UDP + H(+). It carries out the reaction tigogenin + UDP-alpha-D-glucose = tigogenin 3-O-beta-D-glucopyranoside + UDP + H(+). It catalyses the reaction solasodine + UDP-alpha-D-glucose = solasodine 3-beta-D-glucoside + UDP + H(+). The catalysed reaction is solanidine + UDP-alpha-D-glucose = solanidine 3-O-beta-D-glucopyranoside + UDP + H(+). The enzyme catalyses tomatidine + UDP-alpha-D-glucose = tomatidine 3-O-beta-D-glucopyranoside + UDP + H(+). In terms of biological role, glucosyltransferase involved in steroid saponin biosynthesis. Catalyzes the 3-O-glucosylation of steroidal sapogenins, such as diosgenin, nuatigenin and tigogenin. Can glucosylate steroidal alkaloids, such as solanidine, solasodine and tomatidine. This chain is Nuatigenin 3-beta-glucosyltransferase, found in Solanum aculeatissimum (Dutch eggplant).